A 343-amino-acid polypeptide reads, in one-letter code: Ferredoxin--NADP reductase (343 aa).

Asp-36, Gln-44, Tyr-49, Val-89, Phe-124, Asp-289, and Thr-330 together coordinate FAD.

It belongs to the ferredoxin--NADP reductase type 2 family. As to quaternary structure, homodimer. The cofactor is FAD.

The catalysed reaction is 2 reduced [2Fe-2S]-[ferredoxin] + NADP(+) + H(+) = 2 oxidized [2Fe-2S]-[ferredoxin] + NADPH. The sequence is that of Ferredoxin--NADP reductase from Mesorhizobium japonicum (strain LMG 29417 / CECT 9101 / MAFF 303099) (Mesorhizobium loti (strain MAFF 303099)).